A 198-amino-acid chain; its full sequence is uncharacterized protein (198 aa).

It localises to the cytoplasm. This is an uncharacterized protein from Saccharomyces cerevisiae (strain ATCC 204508 / S288c) (Baker's yeast).